The chain runs to 342 residues: Strictosidine synthase (342 aa).

The signal sequence occupies residues Lys-1–Ser-20. The N-linked (GlcNAc...) asparagine glycan is linked to Asn-89.

It belongs to the strictosidine synthase family. As to quaternary structure, monomer.

Its subcellular location is the vacuole. The catalysed reaction is 3alpha(S)-strictosidine + H2O = secologanin + tryptamine. Its pathway is alkaloid biosynthesis; 3alpha(S)-strictosidine biosynthesis; 3alpha(S)-strictosidine from secologanin and tryptamine: step 1/1. Catalyzes the stereospecific condensation of tryptamine with secologanin to form strictosidine, the key intermediate of indole alkaloid biosynthesis. The chain is Strictosidine synthase (STR1) from Rauvolfia mannii.